The following is a 309-amino-acid chain: 1,4-dihydroxy-2-naphthoyl-CoA synthase (309 aa).

Substrate is bound by residues Arg-53, Ser-98–Gln-102, Tyr-110, Trp-152–Gly-156, Thr-179, Ser-185, Tyr-282, and Lys-297.

The protein belongs to the enoyl-CoA hydratase/isomerase family. MenB subfamily.

The catalysed reaction is 2-succinylbenzoyl-CoA + H(+) = 1,4-dihydroxy-2-naphthoyl-CoA + H2O. It participates in quinol/quinone metabolism; 1,4-dihydroxy-2-naphthoate biosynthesis; 1,4-dihydroxy-2-naphthoate from chorismate: step 6/7. It functions in the pathway quinol/quinone metabolism; menaquinone biosynthesis. In terms of biological role, converts o-succinylbenzoyl-CoA (OSB-CoA) to 1,4-dihydroxy-2-naphthoyl-CoA (DHNA-CoA). This Mycolicibacterium smegmatis (strain ATCC 700084 / mc(2)155) (Mycobacterium smegmatis) protein is 1,4-dihydroxy-2-naphthoyl-CoA synthase.